The following is a 185-amino-acid chain: Dual-action ribosomal maturation protein DarP (185 aa).

A disordered region spans residues 1–22; that stretch reads MWKNGAMRGCNKETGEFLGPSR.

The protein belongs to the DarP family.

Its subcellular location is the cytoplasm. Member of a network of 50S ribosomal subunit biogenesis factors which assembles along the 30S-50S interface, preventing incorrect 23S rRNA structures from forming. Promotes peptidyl transferase center (PTC) maturation. This is Dual-action ribosomal maturation protein DarP from Xylella fastidiosa (strain 9a5c).